The sequence spans 562 residues: 2-hydroxyisobutanoyl-CoA mutase large subunit (562 aa).

(3S)-3-hydroxybutanoyl-CoA-binding positions include 76-79, 86-88, aspartate 117, 196-198, arginine 235, asparagine 240, histidine 245, and arginine 284; these read YPTM, TMR, and TVQ.

This sequence belongs to the acyl-CoA mutase large subunit family. Homotetramer composed of two large substrate-binding subunits (HcmA) and two small cobalamin-binding subunits (HcmB).

The enzyme catalyses 2-hydroxyisobutanoyl-CoA = (3S)-3-hydroxybutanoyl-CoA. In terms of biological role, together with HcmB, catalyzes the isomerization of 2-hydroxyisobutyryl-CoA and 3-hydroxybutyryl-CoA. Is specific for 2-hydroxyisobutyryl-CoA and (S)-3-hydroxybutyryl-CoA, and shows only very low activity with (R)-3-hydroxybutyryl-CoA, isobutyryl-CoA and butyryl-CoA. In vitro, can isomerize pivalyl-CoA and isovaleryl-CoA, with much lower efficiency. Plays a central role in the degradation of substrates bearing a tert-butyl moiety, such as the fuel oxygenate methyl tert-butyl ether (MTBE) and its metabolites. The chain is 2-hydroxyisobutanoyl-CoA mutase large subunit from Aquincola tertiaricarbonis.